The sequence spans 153 residues: TM2 domain-containing protein DDB_G0277895 (153 aa).

The TM2 domain occupies Gln3–Ile50. Helical transmembrane passes span Val6 to Leu26 and Val33 to Ile53. The tract at residues Gly85 to Gln153 is disordered. 6 repeat units span residues Gln89–Pro96, Gln97–Pro104, Gln105–Pro112, Gln113–Pro120, Gln121–Pro128, and Pro129–Pro136. Residues Gln89 to Pro136 are 6 X 8 AA tandem repeat of Q-Q-P-Y-G-A-P-P. Residues Gly93–Gln153 show a composition bias toward pro residues.

It belongs to the TM2 family.

The protein localises to the membrane. The protein is TM2 domain-containing protein DDB_G0277895 of Dictyostelium discoideum (Social amoeba).